A 283-amino-acid chain; its full sequence is Probable aquaporin NIP4-2 (283 aa).

N-acetylmethionine is present on Met-1. The segment covering Met-1 to Cys-21 has biased composition (basic and acidic residues). The interval Met-1–Asp-23 is disordered. A run of 2 helical transmembrane segments spans residues Gly-51–Gly-71 and Gly-77–Ser-97. Positions Asn-102–Ala-104 match the NPA 1 motif. Transmembrane regions (helical) follow at residues Val-120–Leu-140, Ala-161–Thr-181, and Leu-189–Ser-209. An NPA 2 motif is present at residues Asn-214 to Ala-216. The helical transmembrane segment at Ile-231–Phe-251 threads the bilayer. Ser-267 carries the phosphoserine modification.

The protein belongs to the MIP/aquaporin (TC 1.A.8) family. NIP (TC 1.A.8.12) subfamily.

It localises to the membrane. Its function is as follows. Aquaporins facilitate the transport of water and small neutral solutes across cell membranes. The chain is Probable aquaporin NIP4-2 (NIP4-2) from Arabidopsis thaliana (Mouse-ear cress).